A 303-amino-acid polypeptide reads, in one-letter code: MAESTFKSGFVAIIGRPNVGKSTLLNRIVGEKIAIMSDKAQTTRNKIQGIYTTDNAQVVFIDTPGVHKPQNSLGNFMVKSAFSALHEADAIWFVVDASMPRGRGDDFIISRLNEVTETPIYLLINKVDLIAREELLAIIESYQVDAPTWTEVFPISATEGDNVPELLDNVVSHLDEGPQYFDADQLTDHPERFVIGELIREKVLQLTRQEVPHSVAVVIDKIAREDEEKIHIQASIIVERPTQKNIIIGKQGTMIKNIGTRARKDIERLMGDKVFLETWVKVEPRWRDRPQALQTLGYNEENY.

Positions 7-176 (KSGFVAIIGR…LDNVVSHLDE (170 aa)) constitute an Era-type G domain. The interval 15–22 (GRPNVGKS) is G1. Residue 15–22 (GRPNVGKS) coordinates GTP. The interval 41–45 (QTTRN) is G2. Residues 62 to 65 (DTPG) are G3. Residues 62–66 (DTPGV) and 125–128 (NKVD) each bind GTP. A G4 region spans residues 125 to 128 (NKVD). The tract at residues 155-157 (ISA) is G5. Residues 207–284 (TRQEVPHSVA…FLETWVKVEP (78 aa)) enclose the KH type-2 domain.

It belongs to the TRAFAC class TrmE-Era-EngA-EngB-Septin-like GTPase superfamily. Era GTPase family. Monomer.

The protein localises to the cytoplasm. Its subcellular location is the cell membrane. Its function is as follows. An essential GTPase that binds both GDP and GTP, with rapid nucleotide exchange. Plays a role in 16S rRNA processing and 30S ribosomal subunit biogenesis and possibly also in cell cycle regulation and energy metabolism. In Leuconostoc citreum (strain KM20), this protein is GTPase Era.